Reading from the N-terminus, the 346-residue chain is tRNA N6-adenosine threonylcarbamoyltransferase (346 aa).

H111 and H115 together coordinate Fe cation. Substrate contacts are provided by residues 134 to 138 (LVSGG), D167, G180, and N279. D307 provides a ligand contact to Fe cation.

It belongs to the KAE1 / TsaD family. Fe(2+) serves as cofactor.

The protein localises to the cytoplasm. The enzyme catalyses L-threonylcarbamoyladenylate + adenosine(37) in tRNA = N(6)-L-threonylcarbamoyladenosine(37) in tRNA + AMP + H(+). In terms of biological role, required for the formation of a threonylcarbamoyl group on adenosine at position 37 (t(6)A37) in tRNAs that read codons beginning with adenine. Is involved in the transfer of the threonylcarbamoyl moiety of threonylcarbamoyl-AMP (TC-AMP) to the N6 group of A37, together with TsaE and TsaB. TsaD likely plays a direct catalytic role in this reaction. The polypeptide is tRNA N6-adenosine threonylcarbamoyltransferase (Burkholderia vietnamiensis (strain G4 / LMG 22486) (Burkholderia cepacia (strain R1808))).